A 385-amino-acid chain; its full sequence is Sesquiterpene alcohol synthase (385 aa).

2 residues coordinate Mg(2+): Asp-123 and Asp-127. The DDXXD motif motif lies at Asp-123–Asp-127.

Belongs to the terpene synthase family. It depends on Mg(2+) as a cofactor. In terms of tissue distribution, specifically expressed in tissues lining the cuticle of the abdominal sternites of mature males.

The enzyme catalyses (2E,6E)-farnesyl diphosphate + H2O = (1S,6S,7R)-sesquipiperitol + diphosphate. Its pathway is pheromone biosynthesis. Functionally, sesquiterpene alcohol synthase that catalyzes the formation of (1S,6S,7R)-sesquipiperitol, a terpene intermediate in murgantiol biosynthesis, a male-released aggregation pheromone. This Murgantia histrionica (Harlequin bug) protein is Sesquiterpene alcohol synthase.